Here is a 313-residue protein sequence, read N- to C-terminus: Ribosomal RNA small subunit methyltransferase H (313 aa).

S-adenosyl-L-methionine-binding positions include 35–37 (GGH), D55, F79, D100, and Q107.

Belongs to the methyltransferase superfamily. RsmH family.

It is found in the cytoplasm. It catalyses the reaction cytidine(1402) in 16S rRNA + S-adenosyl-L-methionine = N(4)-methylcytidine(1402) in 16S rRNA + S-adenosyl-L-homocysteine + H(+). Functionally, specifically methylates the N4 position of cytidine in position 1402 (C1402) of 16S rRNA. The sequence is that of Ribosomal RNA small subunit methyltransferase H from Burkholderia thailandensis (strain ATCC 700388 / DSM 13276 / CCUG 48851 / CIP 106301 / E264).